Consider the following 311-residue polypeptide: tRNA-cytidine(32) 2-sulfurtransferase (311 aa).

The PP-loop motif motif lies at 47–52 (SGGKDS). The [4Fe-4S] cluster site is built by Cys-122, Cys-125, and Cys-213.

It belongs to the TtcA family. As to quaternary structure, homodimer. Mg(2+) is required as a cofactor. It depends on [4Fe-4S] cluster as a cofactor.

It localises to the cytoplasm. It carries out the reaction cytidine(32) in tRNA + S-sulfanyl-L-cysteinyl-[cysteine desulfurase] + AH2 + ATP = 2-thiocytidine(32) in tRNA + L-cysteinyl-[cysteine desulfurase] + A + AMP + diphosphate + H(+). The protein operates within tRNA modification. In terms of biological role, catalyzes the ATP-dependent 2-thiolation of cytidine in position 32 of tRNA, to form 2-thiocytidine (s(2)C32). The sulfur atoms are provided by the cysteine/cysteine desulfurase (IscS) system. The sequence is that of tRNA-cytidine(32) 2-sulfurtransferase from Escherichia fergusonii (strain ATCC 35469 / DSM 13698 / CCUG 18766 / IAM 14443 / JCM 21226 / LMG 7866 / NBRC 102419 / NCTC 12128 / CDC 0568-73).